The primary structure comprises 453 residues: Trigger factor (453 aa).

The PPIase FKBP-type domain occupies 171 to 256; that stretch reads GDRVTVSFKG…ATLVEAPKDT (86 aa).

Belongs to the FKBP-type PPIase family. Tig subfamily.

The protein localises to the cytoplasm. It catalyses the reaction [protein]-peptidylproline (omega=180) = [protein]-peptidylproline (omega=0). Involved in protein export. Acts as a chaperone by maintaining the newly synthesized protein in an open conformation. Functions as a peptidyl-prolyl cis-trans isomerase. In Rhodopseudomonas palustris (strain BisA53), this protein is Trigger factor.